The sequence spans 322 residues: Cytochrome c biogenesis protein CcsA (322 aa).

8 helical membrane-spanning segments follow: residues 6 to 26, 45 to 65, 69 to 89, 97 to 117, 144 to 164, 230 to 250, 265 to 285, and 291 to 311; these read LQLILETFSFFIYFILTFLFF, LIANVSIFLLLITRWITAGYF, NLYESLFFLVWGLNTIWLFLY, LLDNSVSLLLTLLVGFLHFIL, MISYATLMIGSLLSIIYLYFL, LITFGFPLLTIGIIAGAVWAN, WALITWLIFAIYLHTRIIKGW, and AMVASLGFFIIWICYLGVNLL.

Belongs to the CcmF/CycK/Ccl1/NrfE/CcsA family. In terms of assembly, may interact with Ccs1.

The protein resides in the plastid. Its subcellular location is the cyanelle thylakoid membrane. In terms of biological role, required during biogenesis of c-type cytochromes (cytochrome c6 and cytochrome f) at the step of heme attachment. In Cyanophora paradoxa, this protein is Cytochrome c biogenesis protein CcsA.